Reading from the N-terminus, the 224-residue chain is MLLTHLHSDHIAELGDVLITSWVTNFAADPAPLPIIGPPGTAEVVEATLKAFGHDIGYRIAHHADLTTPPPIEVHEYTAGPAWDRDGVTIRVAPTDHRPVTPTIGFRIESDGASVVLAGDTVPCDSLDQLAAGADALVHTVIRKDIVTQIPQQRVKDICDYHSSVQEAAATANRAGVGTLVMTHYVPAIGPGQEEQWRALAATEFSGRIEVGNDLHRVEVHPRR.

Positions 120 and 184 each coordinate Zn(2+).

The protein belongs to the RNase Z family. As to quaternary structure, homodimer. The cofactor is Zn(2+).

It carries out the reaction Endonucleolytic cleavage of RNA, removing extra 3' nucleotides from tRNA precursor, generating 3' termini of tRNAs. A 3'-hydroxy group is left at the tRNA terminus and a 5'-phosphoryl group is left at the trailer molecule.. Functionally, zinc phosphodiesterase, which displays some tRNA 3'-processing endonuclease activity. Probably involved in tRNA maturation, by removing a 3'-trailer from precursor tRNA. This chain is Putative ribonuclease Z (rnz), found in Mycobacterium tuberculosis (strain CDC 1551 / Oshkosh).